The following is a 1012-amino-acid chain: Ankyrin repeat- and BTB/POZ domain-containing protein 3-B (1012 aa).

The helical transmembrane segment at 160–180 (ILSWTISVNCIAASLSALSMY) threads the bilayer. ANK repeat units follow at residues 511–540 (QGMT…DINS), 557–586 (RQAT…NVEG), and 595–624 (YTET…DPMI). In terms of domain architecture, BTB spans 831–897 (SDVTFLVEGK…LYCGGTDALH (67 aa)).

It is found in the membrane. The polypeptide is Ankyrin repeat- and BTB/POZ domain-containing protein 3-B (abtb3b) (Danio rerio (Zebrafish)).